A 468-amino-acid polypeptide reads, in one-letter code: ATP synthase subunit beta (468 aa).

155 to 162 serves as a coordination point for ATP; that stretch reads GGAGVGKT.

The protein belongs to the ATPase alpha/beta chains family. In terms of assembly, F-type ATPases have 2 components, CF(1) - the catalytic core - and CF(0) - the membrane proton channel. CF(1) has five subunits: alpha(3), beta(3), gamma(1), delta(1), epsilon(1). CF(0) has three main subunits: a(1), b(2) and c(9-12). The alpha and beta chains form an alternating ring which encloses part of the gamma chain. CF(1) is attached to CF(0) by a central stalk formed by the gamma and epsilon chains, while a peripheral stalk is formed by the delta and b chains.

It is found in the cell membrane. The enzyme catalyses ATP + H2O + 4 H(+)(in) = ADP + phosphate + 5 H(+)(out). Functionally, produces ATP from ADP in the presence of a proton gradient across the membrane. The catalytic sites are hosted primarily by the beta subunits. This Streptococcus suis (strain 98HAH33) protein is ATP synthase subunit beta.